Reading from the N-terminus, the 593-residue chain is NADH-quinone oxidoreductase subunit C/D (593 aa).

An NADH dehydrogenase I subunit C region spans residues 1 to 184; that stretch reads MTADNALYIP…DPYSLTLAKQ (184 aa). Positions 208–593 are NADH dehydrogenase I subunit D; sequence DYMFLNLGPN…IDFVMADVDR (386 aa).

In the N-terminal section; belongs to the complex I 30 kDa subunit family. It in the C-terminal section; belongs to the complex I 49 kDa subunit family. NDH-1 is composed of 13 different subunits. Subunits NuoB, CD, E, F, and G constitute the peripheral sector of the complex.

It is found in the cell inner membrane. It catalyses the reaction a quinone + NADH + 5 H(+)(in) = a quinol + NAD(+) + 4 H(+)(out). In terms of biological role, NDH-1 shuttles electrons from NADH, via FMN and iron-sulfur (Fe-S) centers, to quinones in the respiratory chain. The immediate electron acceptor for the enzyme in this species is believed to be ubiquinone. Couples the redox reaction to proton translocation (for every two electrons transferred, four hydrogen ions are translocated across the cytoplasmic membrane), and thus conserves the redox energy in a proton gradient. The chain is NADH-quinone oxidoreductase subunit C/D from Pseudomonas syringae pv. tomato (strain ATCC BAA-871 / DC3000).